We begin with the raw amino-acid sequence, 97 residues long: Large ribosomal subunit protein eL21 (97 aa).

The protein belongs to the eukaryotic ribosomal protein eL21 family.

The polypeptide is Large ribosomal subunit protein eL21 (Methanococcus vannielii (strain ATCC 35089 / DSM 1224 / JCM 13029 / OCM 148 / SB)).